Consider the following 624-residue polypeptide: MTTMESLIGLVNRIQRACTVLGDYGGGTGSNAFNSLWEALPTVAVVGGQSSGKSSVLESIVGRDFLPRGSGIVTRRPLVLQLHKTDDGTEEYAEFLHLPKKQFTDFALVRREIQDETDRITGKNKQISPVPIHLSIYSPNVVNLTLIDLPGLTKVAVEGQPETIAEDIESMVRTYVDKPNCIILAISPANQDIATSDAIKLAKDVDPTGERTFGVLTKLDLMDKGTNALEVLEGRSYRLQHPWVGIVNRSQADINKNVDMMLARRKEREYFDTSPDYGHLASKMGSEYLAKLLSKHLESVIRTRIPSILSLINKSIEELERELDRMGRPVAVDAGAQLYTILEMCRAFDKIFKEHLDGGRPGGDRIYGVFDNQLPAALKKLPFDRHLSLQSVKKIVSEADGYQPHLIAPEQGYRRLIEGALGYFRGPAEASVDAVHYVLKELVRKSISETEELKRFPSLQVELAAAANSSLEKFREESKKSVIRLVDMESAYLTAEFFRKLPQEIERPVTNSKNQTASPSSATLDQYGDGHFRRIASNVSAYVNMVSDTLRNTIPKACVYCQVRQAKLALLNYFYSQISKREGKQLGQLLDEDPALMDRRLECAKRLELYKKARDEIDAVAWVR.

T2 is subject to N-acetylthreonine. The region spanning 37-306 is the Dynamin-type G domain; sequence WEALPTVAVV…LESVIRTRIP (270 aa). Positions 47–54 are G1 motif; sequence GGQSSGKS. 50 to 55 contacts GTP; sequence SSGKSS. The segment at 73-75 is G2 motif; it reads VTR. The segment at 148-151 is G3 motif; it reads DLPG. The G4 motif stretch occupies residues 217 to 220; the sequence is TKLD. GTP contacts are provided by residues 218-223 and 248-251; these read KLDLMD and NRSQ. The tract at residues 247 to 250 is G5 motif; it reads VNRS. In terms of domain architecture, GED spans 532–624; that stretch reads FRRIASNVSA…DEIDAVAWVR (93 aa).

This sequence belongs to the TRAFAC class dynamin-like GTPase superfamily. Dynamin/Fzo/YdjA family. In terms of assembly, forms homodimer and may homooligomerize and heterooligomerize to form the phragmoplastin complex. Binds to PHIP1. Ubiquitous.

It localises to the cytoplasm. Its subcellular location is the cytoskeleton. The protein resides in the phragmoplast. It carries out the reaction GTP + H2O = GDP + phosphate + H(+). Functionally, microtubule-associated force-producing protein that is targeted to the tubulo-vesicular network of the forming cell plate during cytokinesis. Also plays a major role in plasma membrane maintenance and cell wall integrity with an implication in vesicular trafficking, polar cell expansion, and other aspects of plant growth and development. Has a GTPase activity. In Arabidopsis thaliana (Mouse-ear cress), this protein is Phragmoplastin DRP1E.